The primary structure comprises 383 residues: MTTRFSAFLSGTPCELDLHRFPATSDPNLQAWDAADEHLLKYLNESNTELAAKFLVINDSFGALTCALATARSDADIVFAADGRTAHLGCKANLASNGLASAKVDYQDCTNLGSFAKGRQILMKLPKNLNFLTDTLSQLSQTLAAGDVILMGAKAKHINQSLLALIAKAVGPATASLTWKKTRIITITADGNPRPVSKPSVWDVPEHGLKVTNLSNVFAASKLDIGARLMMANLPQGHFSSVIDLGCGNGVLALKAAQTYPDARLYLVDESAMAVESARQNWALNALDEGRAEFIWDDCLSHLPNEVQADLVLCNPPFHQGEAITDHIAWQMFNDAKRALKPGGLLHIVGNRHLGYHIKLKRLFGNCKTIASNGKFVILQAVK.

This sequence belongs to the methyltransferase superfamily. RlmG family.

Its subcellular location is the cytoplasm. The catalysed reaction is guanosine(1835) in 23S rRNA + S-adenosyl-L-methionine = N(2)-methylguanosine(1835) in 23S rRNA + S-adenosyl-L-homocysteine + H(+). Specifically methylates the guanine in position 1835 (m2G1835) of 23S rRNA. This Shewanella amazonensis (strain ATCC BAA-1098 / SB2B) protein is Ribosomal RNA large subunit methyltransferase G.